The following is a 101-amino-acid chain: Large ribosomal subunit protein bL21 (101 aa).

The protein belongs to the bacterial ribosomal protein bL21 family. Part of the 50S ribosomal subunit. Contacts protein L20.

Its function is as follows. This protein binds to 23S rRNA in the presence of protein L20. This Corynebacterium aurimucosum (strain ATCC 700975 / DSM 44827 / CIP 107346 / CN-1) (Corynebacterium nigricans) protein is Large ribosomal subunit protein bL21.